Here is a 508-residue protein sequence, read N- to C-terminus: Flagellin (508 aa).

Belongs to the bacterial flagellin family.

It is found in the secreted. The protein resides in the bacterial flagellum. In terms of biological role, flagellin is the subunit protein which polymerizes to form the filaments of bacterial flagella. The chain is Flagellin (fliC) from Salmonella berta.